The primary structure comprises 536 residues: Phosphoenolpyruvate carboxykinase (ATP) (536 aa).

Substrate is bound by residues Arg-61, Tyr-195, and Lys-201. ATP-binding positions include Lys-201, His-220, and 236–244 (GLSGTGKTT). Residues Lys-201 and His-220 each contribute to the Mn(2+) site. A Mn(2+)-binding site is contributed by Asp-257. Residues Glu-285, Arg-322, and Thr-447 each contribute to the ATP site. Residue Arg-322 coordinates substrate.

Belongs to the phosphoenolpyruvate carboxykinase (ATP) family. Mn(2+) is required as a cofactor.

It is found in the cytoplasm. It catalyses the reaction oxaloacetate + ATP = phosphoenolpyruvate + ADP + CO2. Its pathway is carbohydrate biosynthesis; gluconeogenesis. In terms of biological role, involved in the gluconeogenesis. Catalyzes the conversion of oxaloacetate (OAA) to phosphoenolpyruvate (PEP) through direct phosphoryl transfer between the nucleoside triphosphate and OAA. The protein is Phosphoenolpyruvate carboxykinase (ATP) of Sinorhizobium fredii (strain NBRC 101917 / NGR234).